The chain runs to 152 residues: MFP1 attachment factor 1 (152 aa).

Disordered stretches follow at residues 1 to 33 (MAEI…PPTQ) and 107 to 152 (DTVK…ETEP). Positions 12 to 115 (TVTQETQNKP…IDTVKSRSAP (104 aa)) are WPP. Residues 134-152 (EPSSASGLTGEVSSVETEP) show a composition bias toward polar residues.

As to quaternary structure, interacts with WAP through its WPP domain. Binds to MFP1 and FPP proteins. In terms of tissue distribution, expressed in young tomato leaves, young fruits, and flowers (at protein level).

It is found in the nucleus envelope. Its subcellular location is the cytoplasm. It localises to the golgi apparatus. The protein resides in the nucleus. The protein localises to the nucleus matrix. The polypeptide is MFP1 attachment factor 1 (MAF1) (Solanum lycopersicum (Tomato)).